A 64-amino-acid chain; its full sequence is uncharacterized protein (64 aa).

Positions 1–26 are cleaved as a signal peptide; the sequence is MVVKENFCGACLTIPLAFAGAGTAIG. The helical transmembrane segment at 33–53 threads the bilayer; that stretch reads IKKWSIVITIISLLLTVWFIY.

Belongs to the IIV-6 010R family.

The protein resides in the host membrane. This is an uncharacterized protein from Aedes vexans (Inland floodwater mosquito).